Reading from the N-terminus, the 356-residue chain is Peptide chain release factor 1 (356 aa).

Gln234 carries the post-translational modification N5-methylglutamine.

The protein belongs to the prokaryotic/mitochondrial release factor family. In terms of processing, methylated by PrmC. Methylation increases the termination efficiency of RF1.

It localises to the cytoplasm. Peptide chain release factor 1 directs the termination of translation in response to the peptide chain termination codons UAG and UAA. The chain is Peptide chain release factor 1 from Parafrankia sp. (strain EAN1pec).